The chain runs to 96 residues: Co-chaperonin GroES (96 aa).

This sequence belongs to the GroES chaperonin family. As to quaternary structure, heptamer of 7 subunits arranged in a ring. Interacts with the chaperonin GroEL.

Its subcellular location is the cytoplasm. In terms of biological role, together with the chaperonin GroEL, plays an essential role in assisting protein folding. The GroEL-GroES system forms a nano-cage that allows encapsulation of the non-native substrate proteins and provides a physical environment optimized to promote and accelerate protein folding. GroES binds to the apical surface of the GroEL ring, thereby capping the opening of the GroEL channel. This Polynucleobacter necessarius subsp. necessarius (strain STIR1) protein is Co-chaperonin GroES.